A 469-amino-acid chain; its full sequence is Probable lysophospholipase BODYGUARD 1 (469 aa).

The first 45 residues, 1–45, serve as a signal peptide directing secretion; that stretch reads MGFSRSLNRTVGVFVFFILDIVDFLLCFTYKTLDFFFESEWKPCY. Residue cysteine 46 is the site of N-palmitoyl cysteine attachment. Residues 185–439 enclose the AB hydrolase-1 domain; that stretch reads VVFIHGFLSS…IHVVPDKDHI (255 aa). Residue histidine 189 is part of the active site. The Nucleophile role is filled by serine 263. Residues aspartate 410 and histidine 438 each act as charge relay system in the active site.

As to expression, expressed exclusively in protodermal and epidermal cells of all organs, especially on adaxial sides.

The protein localises to the cell membrane. It is found in the secreted. Its subcellular location is the cell wall. In terms of biological role, controls cuticle development and morphogenesis, by promoting cutin and suberin monomers loading. Involved in the regulation of abscissic acid (ABA) biosynthesis in response to osmotic stress. Plays an important role in osmotic stress and drought resistance. Required to ensure a reduced permeability of aerial tissue, thus preventing transpiration. Regulates lateral root hair development. Required for infection by the pathogenic necrotrophic fungus Botrytis cinerea, probably by regulating structural traits of the cuticle. This chain is Probable lysophospholipase BODYGUARD 1, found in Arabidopsis thaliana (Mouse-ear cress).